The sequence spans 119 residues: Holo-[acyl-carrier-protein] synthase (119 aa).

Mg(2+) is bound by residues Asp8 and Glu58.

Belongs to the P-Pant transferase superfamily. AcpS family. It depends on Mg(2+) as a cofactor.

The protein resides in the cytoplasm. It carries out the reaction apo-[ACP] + CoA = holo-[ACP] + adenosine 3',5'-bisphosphate + H(+). Functionally, transfers the 4'-phosphopantetheine moiety from coenzyme A to a Ser of acyl-carrier-protein. The polypeptide is Holo-[acyl-carrier-protein] synthase (Bacillus mycoides (strain KBAB4) (Bacillus weihenstephanensis)).